A 276-amino-acid chain; its full sequence is Probable endonuclease 4 (276 aa).

Residues His-70, His-108, Glu-143, Asp-176, His-179, His-210, Asp-223, His-225, and Glu-255 each contribute to the Zn(2+) site.

This sequence belongs to the AP endonuclease 2 family. Zn(2+) is required as a cofactor.

The enzyme catalyses Endonucleolytic cleavage to 5'-phosphooligonucleotide end-products.. In terms of biological role, endonuclease IV plays a role in DNA repair. It cleaves phosphodiester bonds at apurinic or apyrimidinic (AP) sites, generating a 3'-hydroxyl group and a 5'-terminal sugar phosphate. In Mesomycoplasma hyopneumoniae (strain J / ATCC 25934 / NCTC 10110) (Mycoplasma hyopneumoniae), this protein is Probable endonuclease 4.